The sequence spans 253 residues: 5'-nucleotidase SurE (253 aa).

A divalent metal cation is bound by residues aspartate 8, aspartate 9, serine 39, and asparagine 91.

The protein belongs to the SurE nucleotidase family. A divalent metal cation is required as a cofactor.

The protein localises to the cytoplasm. The catalysed reaction is a ribonucleoside 5'-phosphate + H2O = a ribonucleoside + phosphate. Functionally, nucleotidase that shows phosphatase activity on nucleoside 5'-monophosphates. In Albidiferax ferrireducens (strain ATCC BAA-621 / DSM 15236 / T118) (Rhodoferax ferrireducens), this protein is 5'-nucleotidase SurE.